Here is a 181-residue protein sequence, read N- to C-terminus: Putative NAD(P)H-dependent FMN-containing oxidoreductase YwqN (181 aa).

Belongs to the SsuE family. The cofactor is FMN.

Functionally, putative NADPH-dependent oxidoreductase. This is Putative NAD(P)H-dependent FMN-containing oxidoreductase YwqN (ywqN) from Bacillus subtilis (strain 168).